A 248-amino-acid chain; its full sequence is Probable transcriptional regulatory protein MCA1220 (248 aa).

The protein belongs to the TACO1 family.

The protein resides in the cytoplasm. This Methylococcus capsulatus (strain ATCC 33009 / NCIMB 11132 / Bath) protein is Probable transcriptional regulatory protein MCA1220.